Consider the following 304-residue polypeptide: Urease accessory protein UreD (304 aa).

The protein belongs to the UreD family. As to quaternary structure, ureD, UreF and UreG form a complex that acts as a GTP-hydrolysis-dependent molecular chaperone, activating the urease apoprotein by helping to assemble the nickel containing metallocenter of UreC. The UreE protein probably delivers the nickel.

It localises to the cytoplasm. Functionally, required for maturation of urease via the functional incorporation of the urease nickel metallocenter. This chain is Urease accessory protein UreD, found in Haloquadratum walsbyi (strain DSM 16790 / HBSQ001).